Here is an 81-residue protein sequence, read N- to C-terminus: Penaeidin-3c (81 aa).

Positions 1 to 19 (MRLVVCLVFLASFALVCQG) are cleaved as a signal peptide. Gln20 carries the post-translational modification Pyrrolidone carboxylic acid. 3 disulfides stabilise this stretch: Cys50-Cys65, Cys54-Cys72, and Cys66-Cys73. The residue at position 80 (Ser80) is a Serine amide.

The protein belongs to the penaeidin family. In terms of tissue distribution, higher expression in hemocytes and to a lesser extent in heart, testis, gills, intestine, lymphoid organ and hepatopancreas. Traces in eyes and subcuticular epithelium. Not present in the brain.

Its subcellular location is the cytoplasmic granule. Functionally, antibacterial activity against M.luteus and E.coli bacteria. Antifungal activity against N.crassa and F.oxysporum. Presents chitin-binding activity. In Penaeus vannamei (Whiteleg shrimp), this protein is Penaeidin-3c.